The following is a 959-amino-acid chain: Glycine dehydrogenase (decarboxylating) (959 aa).

Lysine 704 carries the post-translational modification N6-(pyridoxal phosphate)lysine.

Belongs to the GcvP family. In terms of assembly, the glycine cleavage system is composed of four proteins: P, T, L and H. Requires pyridoxal 5'-phosphate as cofactor.

It carries out the reaction N(6)-[(R)-lipoyl]-L-lysyl-[glycine-cleavage complex H protein] + glycine + H(+) = N(6)-[(R)-S(8)-aminomethyldihydrolipoyl]-L-lysyl-[glycine-cleavage complex H protein] + CO2. Its function is as follows. The glycine cleavage system catalyzes the degradation of glycine. The P protein binds the alpha-amino group of glycine through its pyridoxal phosphate cofactor; CO(2) is released and the remaining methylamine moiety is then transferred to the lipoamide cofactor of the H protein. This chain is Glycine dehydrogenase (decarboxylating), found in Parasynechococcus marenigrum (strain WH8102).